The following is a 283-amino-acid chain: HTH-type transcriptional activator RhaR (283 aa).

Positions 179 to 277 (DLLMAALGNS…GVTPRVWRQQ (99 aa)) constitute an HTH araC/xylS-type domain. DNA-binding regions (H-T-H motif) lie at residues 196–217 (QHFC…RQQT) and 244–267 (ISEI…TRET).

As to quaternary structure, binds DNA as a dimer.

It localises to the cytoplasm. Functionally, activates expression of the rhaSR operon in response to L-rhamnose. The sequence is that of HTH-type transcriptional activator RhaR from Cronobacter sakazakii (strain ATCC BAA-894) (Enterobacter sakazakii).